The sequence spans 496 residues: Ammonium transporter 1 member 2 (496 aa).

The next 11 membrane-spanning stretches (helical) occupy residues leucine 39–glycine 59, valine 74–glycine 94, phenylalanine 120–alanine 140, tyrosine 148–tryptophan 168, phenylalanine 192–isoleucine 212, leucine 236–phenylalanine 256, serine 274–phenylalanine 296, valine 307–valine 327, tryptophan 331–alanine 351, leucine 360–phenylalanine 380, and isoleucine 412–valine 432.

The protein belongs to the ammonia transporter channel (TC 1.A.11.2) family. As to expression, expressed in exodermis, sclerenchyma, endodermis and pericycle cells of primary root tips.

The protein localises to the membrane. Functionally, ammonium transporter probably involved in ammonium uptake from the soil and ammonium uptake and retrieval in the vascular system. The polypeptide is Ammonium transporter 1 member 2 (AMT1-2) (Oryza sativa subsp. japonica (Rice)).